The following is a 117-amino-acid chain: Large ribosomal subunit protein bL20c (117 aa).

This sequence belongs to the bacterial ribosomal protein bL20 family.

It localises to the plastid. The protein resides in the chloroplast. Binds directly to 23S ribosomal RNA and is necessary for the in vitro assembly process of the 50S ribosomal subunit. It is not involved in the protein synthesizing functions of that subunit. In Ceratophyllum demersum (Rigid hornwort), this protein is Large ribosomal subunit protein bL20c.